We begin with the raw amino-acid sequence, 127 residues long: MALKIRLSRGGSKKRPYYHIIVADARSPRDGRFLERVGAWDPMLPKDGPRVKLNEERIQYWLGQGAQPTDRVLRFLDAAGLKKRPTRNNPHKGEPGKKAQERIAAAKQAAEEAAAAKTESAPISEEV.

Residues 80–127 (GLKKRPTRNNPHKGEPGKKAQERIAAAKQAAEEAAAAKTESAPISEEV) form a disordered region. Residues 81–90 (LKKRPTRNNP) show a composition bias toward basic residues. Residues 91–101 (HKGEPGKKAQE) are compositionally biased toward basic and acidic residues. The span at 102–121 (RIAAAKQAAEEAAAAKTESA) shows a compositional bias: low complexity.

Belongs to the bacterial ribosomal protein bS16 family.

The chain is Small ribosomal subunit protein bS16 from Bartonella henselae (strain ATCC 49882 / DSM 28221 / CCUG 30454 / Houston 1) (Rochalimaea henselae).